A 266-amino-acid chain; its full sequence is Hydroxymethylpyrimidine/phosphomethylpyrimidine kinase (266 aa).

Q43 lines the 4-amino-5-hydroxymethyl-2-methylpyrimidine pocket.

Belongs to the ThiD family.

The catalysed reaction is 4-amino-5-hydroxymethyl-2-methylpyrimidine + ATP = 4-amino-2-methyl-5-(phosphooxymethyl)pyrimidine + ADP + H(+). The enzyme catalyses 4-amino-2-methyl-5-(phosphooxymethyl)pyrimidine + ATP = 4-amino-2-methyl-5-(diphosphooxymethyl)pyrimidine + ADP. The protein operates within cofactor biosynthesis; thiamine diphosphate biosynthesis; 4-amino-2-methyl-5-diphosphomethylpyrimidine from 5-amino-1-(5-phospho-D-ribosyl)imidazole: step 2/3. It functions in the pathway cofactor biosynthesis; thiamine diphosphate biosynthesis; 4-amino-2-methyl-5-diphosphomethylpyrimidine from 5-amino-1-(5-phospho-D-ribosyl)imidazole: step 3/3. In terms of biological role, catalyzes the phosphorylation of hydroxymethylpyrimidine phosphate (HMP-P) to HMP-PP, and of HMP to HMP-P. The protein is Hydroxymethylpyrimidine/phosphomethylpyrimidine kinase (thiD) of Rhizobium meliloti (strain 1021) (Ensifer meliloti).